A 396-amino-acid polypeptide reads, in one-letter code: E3 ubiquitin-protein ligase NHLRC1 (396 aa).

The RING-type zinc-finger motif lies at 23-69 (CKVCFERFGHRQQRRPRNLPCGHVVCLACVAALAHPRTLALECPFCR). NHL repeat units follow at residues 110-154 (ALTC…FDSG), 158-201 (AHQF…FDFF), 202-242 (GQIK…LEAD), 245-298 (EGVL…FNSS), 299-347 (MQLI…LGKP), and 348-391 (EEFP…FKVM).

Interacts with AGL. Interacts (via the NHL repeats) with EPM2A/laforin. Forms a complex with EPM2A/laforin and HSP70.

It localises to the endoplasmic reticulum. The protein localises to the nucleus. The catalysed reaction is S-ubiquitinyl-[E2 ubiquitin-conjugating enzyme]-L-cysteine + [acceptor protein]-L-lysine = [E2 ubiquitin-conjugating enzyme]-L-cysteine + N(6)-ubiquitinyl-[acceptor protein]-L-lysine.. Its pathway is protein modification; protein ubiquitination. In terms of biological role, E3 ubiquitin-protein ligase. Together with the phosphatase EPM2A/laforin, appears to be involved in the clearance of toxic polyglucosan and protein aggregates via multiple pathways. In complex with EPM2A/laforin and HSP70, suppresses the cellular toxicity of misfolded proteins by promoting their degradation through the ubiquitin-proteasome system (UPS). Ubiquitinates the glycogen-targeting protein phosphatase subunits PPP1R3C/PTG and PPP1R3D in a laforin-dependent manner and targets them for proteasome-dependent degradation, thus decreasing glycogen accumulation. Polyubiquitinates EPM2A/laforin and ubiquitinates AGL and targets them for proteasome-dependent degradation. Also promotes proteasome-independent protein degradation through the macroautophagy pathway. This Rattus norvegicus (Rat) protein is E3 ubiquitin-protein ligase NHLRC1 (Nhlrc1).